Here is a 358-residue protein sequence, read N- to C-terminus: DNA replication and repair protein RecF (358 aa).

An ATP-binding site is contributed by 30–37; sequence GNNGSGKT.

Belongs to the RecF family.

It localises to the cytoplasm. Functionally, the RecF protein is involved in DNA metabolism; it is required for DNA replication and normal SOS inducibility. RecF binds preferentially to single-stranded, linear DNA. It also seems to bind ATP. This Histophilus somni (strain 129Pt) (Haemophilus somnus) protein is DNA replication and repair protein RecF.